A 458-amino-acid chain; its full sequence is Probable M18 family aminopeptidase 1 (458 aa).

Zn(2+)-binding residues include H95, H170, and H434.

Belongs to the peptidase M18 family. The cofactor is Zn(2+).

In Borreliella afzelii (strain PKo) (Borrelia afzelii), this protein is Probable M18 family aminopeptidase 1.